The following is a 788-amino-acid chain: 5-methyltetrahydropteroyltriglutamate--homocysteine methyltransferase (788 aa).

5-methyltetrahydropteroyltri-L-glutamate is bound by residues arginine 24–lysine 27 and lysine 140. Residues isoleucine 463–serine 465 and glutamate 516 contribute to the L-homocysteine site. Residues isoleucine 463–serine 465 and glutamate 516 contribute to the L-methionine site. 5-methyltetrahydropteroyltri-L-glutamate contacts are provided by residues arginine 547–cysteine 548 and tryptophan 593. Position 631 (aspartate 631) interacts with L-homocysteine. Aspartate 631 is a binding site for L-methionine. Glutamate 637 is a binding site for 5-methyltetrahydropteroyltri-L-glutamate. Positions 673, 675, and 697 each coordinate Zn(2+). The active-site Proton donor is histidine 726. Position 758 (cysteine 758) interacts with Zn(2+).

It belongs to the vitamin-B12 independent methionine synthase family. The cofactor is Zn(2+).

It carries out the reaction 5-methyltetrahydropteroyltri-L-glutamate + L-homocysteine = tetrahydropteroyltri-L-glutamate + L-methionine. The protein operates within amino-acid biosynthesis; L-methionine biosynthesis via de novo pathway; L-methionine from L-homocysteine (MetE route): step 1/1. Its function is as follows. Catalyzes the transfer of a methyl group from 5-methyltetrahydrofolate to homocysteine resulting in methionine formation. This chain is 5-methyltetrahydropteroyltriglutamate--homocysteine methyltransferase, found in Rhodopseudomonas palustris (strain TIE-1).